The following is a 228-amino-acid chain: Phosphoribosylformylglycinamidine synthase subunit PurQ (228 aa).

The 224-residue stretch at 3–226 folds into the Glutamine amidotransferase type-1 domain; it reads FAVIVFPGSN…VNYWRETHVV (224 aa). Catalysis depends on C86, which acts as the Nucleophile. Active-site residues include H195 and E197.

As to quaternary structure, part of the FGAM synthase complex composed of 1 PurL, 1 PurQ and 2 PurS subunits.

The protein resides in the cytoplasm. The enzyme catalyses N(2)-formyl-N(1)-(5-phospho-beta-D-ribosyl)glycinamide + L-glutamine + ATP + H2O = 2-formamido-N(1)-(5-O-phospho-beta-D-ribosyl)acetamidine + L-glutamate + ADP + phosphate + H(+). It catalyses the reaction L-glutamine + H2O = L-glutamate + NH4(+). It participates in purine metabolism; IMP biosynthesis via de novo pathway; 5-amino-1-(5-phospho-D-ribosyl)imidazole from N(2)-formyl-N(1)-(5-phospho-D-ribosyl)glycinamide: step 1/2. Its function is as follows. Part of the phosphoribosylformylglycinamidine synthase complex involved in the purines biosynthetic pathway. Catalyzes the ATP-dependent conversion of formylglycinamide ribonucleotide (FGAR) and glutamine to yield formylglycinamidine ribonucleotide (FGAM) and glutamate. The FGAM synthase complex is composed of three subunits. PurQ produces an ammonia molecule by converting glutamine to glutamate. PurL transfers the ammonia molecule to FGAR to form FGAM in an ATP-dependent manner. PurS interacts with PurQ and PurL and is thought to assist in the transfer of the ammonia molecule from PurQ to PurL. This is Phosphoribosylformylglycinamidine synthase subunit PurQ from Geobacillus thermodenitrificans (strain NG80-2).